A 182-amino-acid chain; its full sequence is Early upstream open reading frame (182 aa).

The protein belongs to the EUO family.

This is Early upstream open reading frame from Chlamydophila psittaci (strain ATCC VR-125 / 6BC) (Chlamydia psittaci).